The primary structure comprises 169 residues: uncharacterized protein (169 aa).

Residues 55–77 (SLFIFKAVMILHTCLIVKSIRIF) traverse the membrane as a helical segment.

The protein resides in the membrane. This is an uncharacterized protein from Saccharomyces cerevisiae (strain ATCC 204508 / S288c) (Baker's yeast).